The following is a 648-amino-acid chain: Biosynthetic arginine decarboxylase (648 aa).

Lys-109 carries the N6-(pyridoxal phosphate)lysine modification. 291-301 (IDVGGGLGIDF) serves as a coordination point for substrate.

It belongs to the Orn/Lys/Arg decarboxylase class-II family. SpeA subfamily. Mg(2+) is required as a cofactor. Requires pyridoxal 5'-phosphate as cofactor.

The catalysed reaction is L-arginine + H(+) = agmatine + CO2. Its function is as follows. Catalyzes the biosynthesis of agmatine from arginine. The chain is Biosynthetic arginine decarboxylase from Prochlorococcus marinus subsp. pastoris (strain CCMP1986 / NIES-2087 / MED4).